The sequence spans 997 residues: Autophagy-related protein 9 (997 aa).

At 1 to 318 the chain is on the cytoplasmic side; sequence MERDEYQLPN…DVYNYYLGNG (318 aa). Position 19 is a phosphoserine; by ATG1 (Ser19). The span at 29–39 shows a compositional bias: polar residues; that stretch reads VNPSLNSQEMS. The interval 29 to 88 is disordered; it reads VNPSLNSQEMSNFPLPDIERGSSLLHSTNDSREDVDENDLRVPESDQGTSTEEEDEVDEE. Positions 79-88 are enriched in acidic residues; the sequence is TEEEDEVDEE. Glycyl lysine isopeptide (Lys-Gly) (interchain with G-Cter in ubiquitin) cross-links involve residues Lys113 and Lys121. Phosphoserine is present on Ser122. 2 disordered regions span residues 128-159 and 213-235; these read VEGSTDDSVPKVGQLSSEEEEDNEFINNDGFD and IHHDKDKSANNGPRNINGNQKHG. Residue Lys138 forms a Glycyl lysine isopeptide (Lys-Gly) (interchain with G-Cter in ubiquitin) linkage. Phosphoserine is present on residues Ser143 and Ser144. Residues 144 to 159 are compositionally biased toward acidic residues; sequence SEEEEDNEFINNDGFD. Positions 221–233 are enriched in polar residues; that stretch reads ANNGPRNINGNQK. A helical membrane pass occupies residues 319 to 339; the sequence is FYCIILEKILNICTLLFVVFV. The Lumenal segment spans residues 340-376; the sequence is STYMGHCVDYSKLPTSHRVSDIIIDKCYSNSITGFTK. The chain crosses the membrane as a helical span at residues 377-397; the sequence is FFLWMFYFFVILKIVQLYFDV. Topologically, residues 398 to 538 are cytoplasmic; the sequence is QKLSELQNFY…EELQKRFMLA (141 aa). An intramembrane segment occupies 539–559; that stretch reads GFLNIILAPFLVTYFVLLYFF. At 560–620 the chain is on the cytoplasmic side; sequence RYFNEYKTSP…DQFPKEKTNL (61 aa). The helical transmembrane segment at 621 to 641 threads the bilayer; sequence FLKFVSFICGSFVAILAFLTV. At 642-656 the chain is on the lumenal side; it reads FDPENFLNFEITSDR. Residue Ser657 is modified to Phosphoserine; by ATG1. A helical membrane pass occupies residues 657 to 677; sequence SVIFYITILGAIWSVSRNTIT. Topologically, residues 678–723 are cytoplasmic; the sequence is QEYHVFDPEETLKELYEYTHYLPKEWEGRYHKEEIKLEFCKLYNLR. Residue Lys701 forms a Glycyl lysine isopeptide (Lys-Gly) (interchain with G-Cter in ubiquitin) linkage. An intramembrane segment occupies 724-744; sequence IVILLRELTSLMITPFVLWFS. At 745 to 997 the chain is on the cytoplasmic side; that stretch reads LPSSAGRIVD…EYYKKSDVGR (253 aa). 2 positions are modified to phosphoserine: Ser787 and Ser792. Residue Thr794 is modified to Phosphothreonine. The residue at position 802 (Ser802) is a Phosphoserine; by ATG1. Thr804 bears the Phosphothreonine; by ATG1 mark. Phosphoserine; by ATG1 is present on residues Ser831 and Ser842. Position 864 is a phosphoserine (Ser864). Phosphoserine; by ATG1 occurs at positions 948 and 969.

It belongs to the ATG9 family. In terms of assembly, homotrimer; forms a homotrimer with a central pore that forms a path between the two membrane leaflets. Interacts with ATG23 and ATG27 to form a cycling complex for trafficking to the PAS. Interacts (via N-terminus) with ATG11, required for recruitment of ATG9 to the PAS for the Cvt pathway during nutrient-rich conditions. Interacts (via N-terminus) with ATG17; required for recruitment to the PAS during autophagy and starved conditions. Interacts with ATG2 and ATG18; required for the retrieval of ATG9 from the PAS to the cytoplasmic pool. Interacts with ATG41. Interacts with the conserved oligomeric Golgi (COG) complex subunits COG3 and COG4. Interacts with TRS85. Post-translationally, phosphorylated by ATG1; phosphorylation is required for autophagy and cytoplasm to vacuole transport (Cvt) vesicle formation. Phosphorylation by ATG1 regulates ATG18 interaction and preautophagosome elongation. Phosphorylation at Ser-122 is required for selective autophagy by regulating anterograde trafficking and interaction with ATG23 and ATG27. Phosphorylation at Ser-122 prevents ubiquitination by the SCF(MET30) complex. In terms of processing, ubiquitinated by the SCF(MET30) complex in normal conditions, leading to its degradation by the proteasome, thereby preventing inappropriate induction of autophagy. Ubiquitination by the SCF(MET30) complex is prevented by phosphorylation at Ser-122.

It is found in the preautophagosomal structure membrane. The protein resides in the cytoplasmic vesicle membrane. The protein localises to the golgi apparatus membrane. Its subcellular location is the endoplasmic reticulum membrane. It localises to the mitochondrion membrane. The catalysed reaction is a 1,2-diacyl-sn-glycero-3-phosphocholine(in) = a 1,2-diacyl-sn-glycero-3-phosphocholine(out). It carries out the reaction a 1,2-diacyl-sn-glycero-3-phospho-L-serine(in) = a 1,2-diacyl-sn-glycero-3-phospho-L-serine(out). It catalyses the reaction a 1,2-diacyl-sn-glycero-3-phosphoethanolamine(in) = a 1,2-diacyl-sn-glycero-3-phosphoethanolamine(out). The enzyme catalyses a 1,2-diacyl-sn-glycero-3-phospho-(1D-myo-inositol-3-phosphate)(in) = a 1,2-diacyl-sn-glycero-3-phospho-(1D-myo-inositol-3-phosphate)(out). Its function is as follows. Phospholipid scramblase involved in autophagy and cytoplasm to vacuole transport (Cvt) vesicle formation. Cycles between the preautophagosomal structure/phagophore assembly site (PAS) and the cytoplasmic vesicle pool and supplies membrane for the growing autophagosome. Lipid scramblase activity plays a key role in preautophagosomal structure/phagophore assembly by distributing the phospholipids that arrive through ATG2 from the cytoplasmic to the luminal leaflet of the bilayer, thereby driving autophagosomal membrane expansion. Required for mitophagy. Also involved in endoplasmic reticulum-specific autophagic process and is essential for the survival of cells subjected to severe ER stress. Recruits vesicle-tethering proteins TRS85 and YPT1 to the autophagosome formation site. Also recruits ATG23 and ATG8 to the PAS. The polypeptide is Autophagy-related protein 9 (Saccharomyces cerevisiae (strain ATCC 204508 / S288c) (Baker's yeast)).